The following is a 1123-amino-acid chain: Alpha-mannosidase E (1123 aa).

Residues 1–21 (MNKTKLIKIIFVIGVWILLST) form the signal peptide. N-linked (GlcNAc...) asparagine glycosylation is found at Asn2 and Asn38. Residues 22 to 1072 (FIINIYNENF…KYNRPNHLAL (1051 aa)) lie on the Extracellular side of the membrane. His67 and Asp69 together coordinate Zn(2+). An N-linked (GlcNAc...) asparagine glycan is attached at Asn140. The Zn(2+) site is built by Asp150 and His409. Asp150 serves as the catalytic Nucleophile. 6 N-linked (GlcNAc...) asparagine glycosylation sites follow: Asn521, Asn675, Asn858, Asn887, Asn975, and Asn990. A helical transmembrane segment spans residues 1073 to 1093 (ILSLSIGTPAGILIIVIALVV). The Cytoplasmic segment spans residues 1094 to 1123 (IYKKRKNRKTLTSSYSLLNLILKDRADSSP).

Belongs to the glycosyl hydrolase 38 family. Zn(2+) is required as a cofactor.

It is found in the membrane. It carries out the reaction Hydrolysis of terminal, non-reducing alpha-D-mannose residues in alpha-D-mannosides.. The sequence is that of Alpha-mannosidase E (manE) from Dictyostelium discoideum (Social amoeba).